A 160-amino-acid chain; its full sequence is Cytochrome b6-f complex subunit 4 (160 aa).

Helical transmembrane passes span 36–56 (LLYV…ALAV), 95–115 (LLGV…PFIE), and 131–151 (TVFL…ALPL).

It belongs to the cytochrome b family. PetD subfamily. In terms of assembly, the 4 large subunits of the cytochrome b6-f complex are cytochrome b6, subunit IV (17 kDa polypeptide, PetD), cytochrome f and the Rieske protein, while the 4 small subunits are PetG, PetL, PetM and PetN. The complex functions as a dimer.

It is found in the cellular thylakoid membrane. Functionally, component of the cytochrome b6-f complex, which mediates electron transfer between photosystem II (PSII) and photosystem I (PSI), cyclic electron flow around PSI, and state transitions. The sequence is that of Cytochrome b6-f complex subunit 4 from Trichormus variabilis (strain ATCC 29413 / PCC 7937) (Anabaena variabilis).